A 107-amino-acid chain; its full sequence is Ferredoxin (107 aa).

4Fe-4S ferredoxin-type domains follow at residues E8 to N37 and G38 to E67. [4Fe-4S] cluster-binding residues include C17, C20, and C23. [3Fe-4S] cluster contacts are provided by C27, C47, and C53. C57 is a binding site for [4Fe-4S] cluster.

Monomer. [4Fe-4S] cluster serves as cofactor. The cofactor is [3Fe-4S] cluster. Post-translationally, the N-terminus is blocked.

Functionally, ferredoxins are iron-sulfur proteins that transfer electrons in a wide variety of metabolic reactions. The protein is Ferredoxin of Pyrobaculum islandicum (strain DSM 4184 / JCM 9189 / GEO3).